The following is a 275-amino-acid chain: NH(3)-dependent NAD(+) synthetase (275 aa).

47-54 (GISGGQDS) serves as a coordination point for ATP. Mg(2+) is bound at residue aspartate 53. Arginine 141 provides a ligand contact to deamido-NAD(+). Threonine 161 is an ATP binding site. Residue glutamate 166 coordinates Mg(2+). The deamido-NAD(+) site is built by lysine 174 and aspartate 181. ATP-binding residues include lysine 190 and threonine 212. Residue 261 to 262 (HK) coordinates deamido-NAD(+).

It belongs to the NAD synthetase family. In terms of assembly, homodimer.

It carries out the reaction deamido-NAD(+) + NH4(+) + ATP = AMP + diphosphate + NAD(+) + H(+). Its pathway is cofactor biosynthesis; NAD(+) biosynthesis; NAD(+) from deamido-NAD(+) (ammonia route): step 1/1. Its function is as follows. Catalyzes the ATP-dependent amidation of deamido-NAD to form NAD. Uses ammonia as a nitrogen source. This is NH(3)-dependent NAD(+) synthetase from Lacticaseibacillus paracasei (strain ATCC 334 / BCRC 17002 / CCUG 31169 / CIP 107868 / KCTC 3260 / NRRL B-441) (Lactobacillus paracasei).